The primary structure comprises 299 residues: MKVETPVSGVGLGLRRALMGPLSQARDYAPESIPFDFMEVAPENWIPMGGRQGKEFRAFTERYPFVAHGLSLSLGGPEPLDFELLKSVKSFLKQHNIRRYTEHLSYCSDHGHLYDLMPIPFTQEAVYYVADRIRQVQDFLEQPIGIEHVSYYAQLGNAALGAQMSEIDFVNAVLKEANCELLLDVNNAYVNGINHGYDPLDFISALPGERICYLHIAGHFDEAEDLKVDTHGSDVIDPVWALLDHAYQTFGSLPTLLERDFNIPDNATLFAELRKIGGYQQLYPSAAIKSEDWQKPAQP.

It belongs to the UPF0276 family.

The chain is UPF0276 protein ABO_1518 from Alcanivorax borkumensis (strain ATCC 700651 / DSM 11573 / NCIMB 13689 / SK2).